The chain runs to 249 residues: MKVLVAVKRVVDYNVKVRVKADNSGVDLANVKMSMNPFCEIAVEEAVRLKEKGVATEIVAVSVGPTAAQEQLRTALALGADRAILVESNDELNSLAVAKLLKAVVDKEQPQLVILGKQAIDSDNNQTGQMLAALTGYAQGTFASKVEVAGDKVNVTREIDGGLQTVALNLPAIVTTDLRLNEPRYASLPNIMKAKKKPLDVVTPDALGVSTASTVKTLKVEAPAARSAGIKVKSVAELVEKLKNEAKVI.

This sequence belongs to the ETF beta-subunit/FixA family. In terms of assembly, heterodimer of an alpha and a beta subunit. Requires FAD as cofactor. AMP is required as a cofactor.

The electron transfer flavoprotein serves as a specific electron acceptor for other dehydrogenases. It transfers the electrons to the main respiratory chain via ETF-ubiquinone oxidoreductase (ETF dehydrogenase). The polypeptide is Electron transfer flavoprotein subunit beta (etfB) (Pseudomonas aeruginosa (strain ATCC 15692 / DSM 22644 / CIP 104116 / JCM 14847 / LMG 12228 / 1C / PRS 101 / PAO1)).